We begin with the raw amino-acid sequence, 351 residues long: Dihydroorotate dehydrogenase (quinone) (351 aa).

FMN contacts are provided by residues 61–65 (AGLDK) and T85. K65 provides a ligand contact to substrate. Position 110–114 (110–114 (NRMGF)) interacts with substrate. FMN is bound by residues N139 and N172. N172 provides a ligand contact to substrate. S175 serves as the catalytic Nucleophile. Position 177 (N177) interacts with substrate. FMN contacts are provided by K217 and T245. 246-247 (NT) serves as a coordination point for substrate. Residues G268, G297, and 318–319 (YS) contribute to the FMN site.

The protein belongs to the dihydroorotate dehydrogenase family. Type 2 subfamily. In terms of assembly, monomer. It depends on FMN as a cofactor.

The protein localises to the cell membrane. The enzyme catalyses (S)-dihydroorotate + a quinone = orotate + a quinol. It functions in the pathway pyrimidine metabolism; UMP biosynthesis via de novo pathway; orotate from (S)-dihydroorotate (quinone route): step 1/1. Functionally, catalyzes the conversion of dihydroorotate to orotate with quinone as electron acceptor. In Xanthomonas euvesicatoria pv. vesicatoria (strain 85-10) (Xanthomonas campestris pv. vesicatoria), this protein is Dihydroorotate dehydrogenase (quinone).